We begin with the raw amino-acid sequence, 114 residues long: Propane 2-monooxygenase, effector component (114 aa).

Belongs to the TmoD/XamoD family. As to quaternary structure, the propane 2-monooxygenase multicomponent enzyme system is composed of an electron transfer component and a monooxygenase component interacting with the effector protein MimD. The electron transfer component is composed of a reductase (MimB), and the monooxygenase component is formed by a large subunit (MimA) and a small subunit (MimC).

Its function is as follows. Effector component of the propane 2-monooxygenase multicomponent enzyme system which is involved in the degradation of propane via the O2-dependent hydroxylation of propane. The chain is Propane 2-monooxygenase, effector component from Mycolicibacterium smegmatis (strain ATCC 700084 / mc(2)155) (Mycobacterium smegmatis).